A 288-amino-acid polypeptide reads, in one-letter code: Probable endonuclease 4 (288 aa).

His-75, His-115, Glu-153, Asp-187, His-190, His-224, Asp-237, His-239, and Glu-269 together coordinate Zn(2+).

The protein belongs to the AP endonuclease 2 family. Requires Zn(2+) as cofactor.

It carries out the reaction Endonucleolytic cleavage to 5'-phosphooligonucleotide end-products.. Functionally, endonuclease IV plays a role in DNA repair. It cleaves phosphodiester bonds at apurinic or apyrimidinic (AP) sites, generating a 3'-hydroxyl group and a 5'-terminal sugar phosphate. The sequence is that of Probable endonuclease 4 from Chlamydia trachomatis serovar A (strain ATCC VR-571B / DSM 19440 / HAR-13).